A 245-amino-acid polypeptide reads, in one-letter code: Adapter protein MecA (245 aa).

Belongs to the MecA family. Homodimer.

Functionally, enables the recognition and targeting of unfolded and aggregated proteins to the ClpC protease or to other proteins involved in proteolysis. In Streptococcus pneumoniae (strain Hungary19A-6), this protein is Adapter protein MecA.